Here is a 126-residue protein sequence, read N- to C-terminus: Holo-[acyl-carrier-protein] synthase (126 aa).

Positions 9 and 58 each coordinate Mg(2+).

Belongs to the P-Pant transferase superfamily. AcpS family. The cofactor is Mg(2+).

Its subcellular location is the cytoplasm. It carries out the reaction apo-[ACP] + CoA = holo-[ACP] + adenosine 3',5'-bisphosphate + H(+). Functionally, transfers the 4'-phosphopantetheine moiety from coenzyme A to a Ser of acyl-carrier-protein. This is Holo-[acyl-carrier-protein] synthase from Vibrio atlanticus (strain LGP32) (Vibrio splendidus (strain Mel32)).